We begin with the raw amino-acid sequence, 153 residues long: Endoribonuclease YbeY (153 aa).

Zn(2+) contacts are provided by histidine 114, histidine 118, and histidine 124.

This sequence belongs to the endoribonuclease YbeY family. Requires Zn(2+) as cofactor.

It localises to the cytoplasm. In terms of biological role, single strand-specific metallo-endoribonuclease involved in late-stage 70S ribosome quality control and in maturation of the 3' terminus of the 16S rRNA. The polypeptide is Endoribonuclease YbeY (Shewanella sp. (strain MR-4)).